A 775-amino-acid polypeptide reads, in one-letter code: MSSTAHNSQPSTGNGVTKRKSGSAACIHCHRRKVRCDARIVGLPCSNCRSAGKADCRIHEKKKRLAVRSILDPVPIRCRPPPDSDSTPKLLPSTPIQPNAFTTAFRGVQPDVTSPVAAGAQIIQSPHSSYTNGNHLSNNRGSQPITETQTFTRQPGADRSMELENNADLEKRLVKLIDEEESGSREIQRGVRAIYVGHELSNMSFLIRQQRDKDDDVYHFAGNEIPRRQLRTGHDQLLMDALTLPEPALADELVEAYFMHVNPGYPIIEEDLFMTQYRNRDPADPPPILLLQAILLVGAHVTRPKAERDALKEIFFRRVKWLFDSRIERNRDIMVQAALLMTWHSDSADDDVAANAHYWVGVAARIATGLGMHRNPVSSKFVPRDRRMWRRLWYILVQFDVMVSLSYGRPQAINLEDSDVSPLTPSDFEGCGSRVQAEYVIHFSELCTMIPYIVRERFGLRVSAERRKAALQEADEALANWSLKLPDSLRLRASDMDPWSAMLHLTYNNFLILLHRPHPRASAYSDDYGPHDAEICSAAAGVIASIFEELRLNDRLKFLWYSGVHTLFTAMIQVRVELRFSNPVLAINALRRFDSASYSLRELAEYWSHANTILRLFQDSKRLQEDLRMATSERPRRFSTHDQNKNTTNPSNPHPTPTPNLNSNTTIQSAQTEPRPPYEVPTPESPRMPPTTMSPHQNQPFDSWIPSSHLASVDPIDQPREFLDWRQLFSFTDPDQSVLPVPMEGLPELEDEWRQIYWQETPMSDLLQDGGWMHG.

A compositionally biased stretch (polar residues) spans 1–15 (MSSTAHNSQPSTGNG). The segment at 1-20 (MSSTAHNSQPSTGNGVTKRK) is disordered. The zn(2)-C6 fungal-type DNA-binding region spans 26–59 (CIHCHRRKVRCDARIVGLPCSNCRSAGKADCRIH). Positions 126-153 (PHSSYTNGNHLSNNRGSQPITETQTFTR) are enriched in polar residues. 2 disordered regions span residues 126 to 159 (PHSSYTNGNHLSNNRGSQPITETQTFTRQPGADR) and 630 to 699 (ATSE…HQNQ). Positions 630–644 (ATSERPRRFSTHDQN) are enriched in basic and acidic residues. Residues 674–689 (PRPPYEVPTPESPRMP) are compositionally biased toward pro residues.

The protein resides in the nucleus. Positively regulates the expression of genes involved in the catabolism of certain amides, omega amino acids, and lactams. This Aspergillus oryzae (strain ATCC 42149 / RIB 40) (Yellow koji mold) protein is Acetamidase regulatory protein (amdR).